The sequence spans 189 residues: MTRLIIGLGNPGDRYFETKHNVGFMLLDKIAKRENVTFNHDKIFQADIATTFIDGEKIYLVKPTTFMNESGKAVHALMTYYGLDATDILVAYDDLDMAVGKIRFRQKGSAGGHNGIKSIVKHIGTQEFDRIKIGIGRPKGKMSVVNHVLSGFDIEDRIEIDLALDKLDKAVNVYLEEDDFDTVMRKFNG.

Tyr15 serves as a coordination point for tRNA. Residue His20 is the Proton acceptor of the active site. Residues Phe66, Asn68, and Asn114 each coordinate tRNA.

This sequence belongs to the PTH family. As to quaternary structure, monomer.

It localises to the cytoplasm. The catalysed reaction is an N-acyl-L-alpha-aminoacyl-tRNA + H2O = an N-acyl-L-amino acid + a tRNA + H(+). Hydrolyzes ribosome-free peptidyl-tRNAs (with 1 or more amino acids incorporated), which drop off the ribosome during protein synthesis, or as a result of ribosome stalling. In terms of biological role, catalyzes the release of premature peptidyl moieties from peptidyl-tRNA molecules trapped in stalled 50S ribosomal subunits, and thus maintains levels of free tRNAs and 50S ribosomes. This Streptococcus suis (strain 98HAH33) protein is Peptidyl-tRNA hydrolase.